A 373-amino-acid chain; its full sequence is Erythronate-4-phosphate dehydrogenase (373 aa).

The substrate site is built by S45 and T67. NAD(+) is bound by residues D147, 206–208 (ASR), and D232. The active site involves R208. E237 is a catalytic residue. The Proton donor role is filled by H254. Position 257 (G257) interacts with NAD(+). Residue Y258 participates in substrate binding.

The protein belongs to the D-isomer specific 2-hydroxyacid dehydrogenase family. PdxB subfamily. As to quaternary structure, homodimer.

The protein localises to the cytoplasm. It catalyses the reaction 4-phospho-D-erythronate + NAD(+) = (R)-3-hydroxy-2-oxo-4-phosphooxybutanoate + NADH + H(+). It functions in the pathway cofactor biosynthesis; pyridoxine 5'-phosphate biosynthesis; pyridoxine 5'-phosphate from D-erythrose 4-phosphate: step 2/5. Its function is as follows. Catalyzes the oxidation of erythronate-4-phosphate to 3-hydroxy-2-oxo-4-phosphonooxybutanoate. This Tolumonas auensis (strain DSM 9187 / NBRC 110442 / TA 4) protein is Erythronate-4-phosphate dehydrogenase.